Consider the following 275-residue polypeptide: MTEISITTSVPDAGAPPSVVGGQVERAKVSVRDLNFYYGDNHALKAINLNLIANRVTAFIGPSGCGKSTLLRVFNRMYDLYPGQRATGQVMLDSQNVLDAKLDLNLLRARVGMVFQKPTPFPMTIYENIAFGVRLYEKISKSEMDNRVERALRGGALWNEVKDQLGASGLSLSGGQQQRLCIARTIAVRPEVILFDEPCSALDPISTAKIEELIDELKEDYTIAIVTHNMQQAARVSDSTAFMYLGELIEFGETNKIFTSPTDRRTQDYITGRFG.

Residues 29-270 form the ABC transporter domain; the sequence is VSVRDLNFYY…PTDRRTQDYI (242 aa). An ATP-binding site is contributed by 61-68; sequence GPSGCGKS.

This sequence belongs to the ABC transporter superfamily. Phosphate importer (TC 3.A.1.7) family. The complex is composed of two ATP-binding proteins (PstB), two transmembrane proteins (PstC and PstA) and a solute-binding protein (PstS).

The protein localises to the cell inner membrane. The catalysed reaction is phosphate(out) + ATP + H2O = ADP + 2 phosphate(in) + H(+). Its function is as follows. Part of the ABC transporter complex PstSACB involved in phosphate import. Responsible for energy coupling to the transport system. The chain is Phosphate import ATP-binding protein PstB from Rhodopseudomonas palustris (strain BisB18).